The following is a 3343-amino-acid chain: Cadherin-3 (3343 aa).

A signal peptide spans 1–26 (MTIRIFFSIFLLNHLIFFHLFNFTHQ). An N-linked (GlcNAc...) asparagine glycan is attached at Asn-22. Residues 27 to 3228 (FSEETIKFSV…LFSNFSNTTT (3202 aa)) are Extracellular-facing. 3 Cadherin domains span residues 28–117 (SEET…SPIF), 118–229 (PIDV…PPNF), and 242–330 (PNTK…EPNI). Asn-149, Asn-250, Asn-288, Asn-369, Asn-467, and Asn-612 each carry an N-linked (GlcNAc...) asparagine glycan. The 107-residue stretch at 632–738 (ICQITEIHVL…EDVNDNVPKF (107 aa)) folds into the Cadherin 4 domain. 16 N-linked (GlcNAc...) asparagine glycosylation sites follow: Asn-752, Asn-806, Asn-941, Asn-966, Asn-970, Asn-985, Asn-1042, Asn-1335, Asn-1425, Asn-1429, Asn-1557, Asn-1563, Asn-1597, Asn-1624, Asn-1695, and Asn-1702. Residues 1279-1368 (RENELMFEIE…ADVNDNKPKI (90 aa)) enclose the Cadherin 5 domain. 3 Cadherin domains span residues 1545–1648 (DKAA…APRF), 1676–1756 (AEDL…TPEF), and 1757–1857 (ELSS…HPMI). Residues Asn-1895 and Asn-1900 are each glycosylated (N-linked (GlcNAc...) asparagine). Cadherin domains follow at residues 1954–2045 (TVSV…SPRF), 2046–2145 (DQQL…NAPR), and 2146–2245 (FSRI…APIF). N-linked (GlcNAc...) asparagine glycans are attached at residues Asn-2053, Asn-2129, Asn-2203, Asn-2382, Asn-2391, Asn-2410, Asn-2414, Asn-2431, Asn-2527, Asn-2530, Asn-2564, Asn-2621, Asn-2665, Asn-2712, Asn-2798, Asn-2809, Asn-2927, Asn-2976, and Asn-3045. The Laminin G-like domain occupies 3040-3205 (EISVRNGTSH…SSTGTSRNEC (166 aa)). Cys-3172 and Cys-3205 are disulfide-bonded. Residues Asn-3222 and Asn-3225 are each glycosylated (N-linked (GlcNAc...) asparagine). Residues 3229-3250 (LILLITLALISLIGFSVCLLAI) traverse the membrane as a helical segment. Topologically, residues 3251 to 3343 (RRRWRQKSPG…RDGHINMAYL (93 aa)) are cytoplasmic. The tract at residues 3257-3277 (KSPGDQKQTERSNGWTGHVMP) is disordered.

Expressed in the anchor cell.

Its subcellular location is the cell membrane. It localises to the basolateral cell membrane. The protein localises to the cell junction. Its function is as follows. Cell adhesion protein involved in the control of epithelial morphogenesis. Together with metalloproteinase zmp-1 and hemicentin him-4, plays a role in anchor cell (AC) invasion during postembryonic vulval development. This Caenorhabditis elegans protein is Cadherin-3 (cdh-3).